Here is a 235-residue protein sequence, read N- to C-terminus: Large ribosomal subunit protein uL1 (235 aa).

The protein belongs to the universal ribosomal protein uL1 family. In terms of assembly, part of the 50S ribosomal subunit.

In terms of biological role, binds directly to 23S rRNA. The L1 stalk is quite mobile in the ribosome, and is involved in E site tRNA release. Its function is as follows. Protein L1 is also a translational repressor protein, it controls the translation of the L11 operon by binding to its mRNA. The polypeptide is Large ribosomal subunit protein uL1 (Synechococcus sp. (strain CC9902)).